Consider the following 745-residue polypeptide: Poly(A) polymerase alpha (745 aa).

Residues 1–17 (MPFPVTTQGSQQTQPPQ) are compositionally biased toward low complexity. The disordered stretch occupies residues 1-22 (MPFPVTTQGSQQTQPPQKHYGI). Phosphoserine is present on residues S10 and S24. Residues 100–102 (FGS), T109, 113–115 (DID), D167, K228, Y237, and 246–247 (GV) contribute to the ATP site. Mg(2+) is bound by residues D113, D115, and D167. Residues K444, K445, K506, and K507 each participate in a glycyl lysine isopeptide (Lys-Gly) (interchain with G-Cter in SUMO) cross-link. Positions 490 to 507 (RKQLHQLLPNHVLQKKKK) match the Nuclear localization signal 1 motif. Positions 508 to 643 (HSTEGVKLTA…TSGNAATKIP (136 aa)) are ser/Thr-rich. The segment covering 523–534 (LDLSMDSDNSMS) has biased composition (low complexity). Disordered regions lie at residues 523–565 (LDLS…AVTA) and 577–704 (SVPQ…SETI). Over residues 535–557 (VPSPTSATKTSPLNSSGSSQGRN) the composition is skewed to polar residues. 2 positions are modified to phosphoserine: S537 and S558. Composition is skewed to low complexity over residues 583 to 594 (SSESSGGTSSES) and 611 to 640 (TVSR…NAAT). K641 and K650 each carry N6-acetyllysine. The Nuclear localization signal 2 motif lies at 650-665 (KRTSSPHKEESPKKTK). 2 stretches are compositionally biased toward basic and acidic residues: residues 655 to 666 (PHKEESPKKTKT) and 682 to 692 (GHDKTEAKEQL). The interval 677–745 (CLALSGHDKT…KNSIKLRLNR (69 aa)) is required for interaction with NUDT21. Residues 694–704 (TETSTTQSETI) show a composition bias toward low complexity. Position 736 is an N6-acetyllysine; alternate (K736). K736 is covalently cross-linked (Glycyl lysine isopeptide (Lys-Gly) (interchain with G-Cter in SUMO); alternate). Position 738 is a phosphoserine (S738). K740 is subject to N6-acetyllysine; alternate. K740 is covalently cross-linked (Glycyl lysine isopeptide (Lys-Gly) (interchain with G-Cter in SUMO); alternate).

This sequence belongs to the poly(A) polymerase family. As to quaternary structure, monomer. Found in a complex with CPSF1, FIP1L1 and PAPOLA. Interacts with AHCYL1 and FIP1L1; the interaction with AHCYL1 seems to increase interaction with FIP1L1. Interacts with NUDT21; the interaction is diminished by acetylation. Interacts with KPNB1; the interaction promotes PAP nuclear import and is inhibited by acetylation of PAP. Mg(2+) serves as cofactor. Mn(2+) is required as a cofactor. Post-translationally, polysumoylated. Varying sumoylation depending on tissue- and cell-type. Highly sumoylated in bladder and NIH 3T3 cells. Sumoylation is required for nuclear localization and enhances PAP stability. Desumoylated by SENP1. Inhibits polymerase activity. Hyperphosphorylation on multiple CDK2 consensus and non-consensus sites in the C-terminal Ser/Thr-rich region represses PAP activity in late M-phase. Phosphorylation/dephosphorylation may regulate the interaction between PAP and CPSF. In terms of processing, acetylated in the C-terminus. Acetylation decreases interaction with NUDT21 and KPNB1, and inhibits nuclear localization through inhibiting binding to the importin alpha/beta complex.

It localises to the cytoplasm. The protein localises to the nucleus. It carries out the reaction RNA(n) + ATP = RNA(n)-3'-adenine ribonucleotide + diphosphate. Its function is as follows. Polymerase that creates the 3'-poly(A) tail of mRNA's. Also required for the endoribonucleolytic cleavage reaction at some polyadenylation sites. May acquire specificity through interaction with a cleavage and polyadenylation specificity factor (CPSF) at its C-terminus. This chain is Poly(A) polymerase alpha (PAPOLA), found in Homo sapiens (Human).